The following is a 75-amino-acid chain: Small ribosomal subunit protein bS18 (75 aa).

It belongs to the bacterial ribosomal protein bS18 family. As to quaternary structure, part of the 30S ribosomal subunit. Forms a tight heterodimer with protein bS6.

Its function is as follows. Binds as a heterodimer with protein bS6 to the central domain of the 16S rRNA, where it helps stabilize the platform of the 30S subunit. In Acinetobacter baumannii (strain AB307-0294), this protein is Small ribosomal subunit protein bS18.